A 612-amino-acid chain; its full sequence is Glutamine--fructose-6-phosphate aminotransferase [isomerizing] (612 aa).

The active-site Nucleophile; for GATase activity is the Cys-2. The Glutamine amidotransferase type-2 domain occupies 2 to 219 (CGIVGANSTR…EGDIAIISKD (218 aa)). SIS domains lie at 287–427 (AKEL…LKNS) and 460–602 (ISEY…VDQP). Lys-607 serves as the catalytic For Fru-6P isomerization activity.

Homodimer.

It is found in the cytoplasm. The enzyme catalyses D-fructose 6-phosphate + L-glutamine = D-glucosamine 6-phosphate + L-glutamate. Catalyzes the first step in hexosamine metabolism, converting fructose-6P into glucosamine-6P using glutamine as a nitrogen source. In Francisella tularensis subsp. tularensis (strain SCHU S4 / Schu 4), this protein is Glutamine--fructose-6-phosphate aminotransferase [isomerizing].